Here is a 2120-residue protein sequence, read N- to C-terminus: Alpha-tectorin (2120 aa).

The first 24 residues, 1–24 (MNTRSLLSAWAALLVVTVRHRAHA), serve as a signal peptide directing secretion. Residues N34, N215, N258, N277, N445, and N496 are each glycosylated (N-linked (GlcNAc...) asparagine). An NIDO domain is found at 98–252 (PFCGDVANGI…GRWAFKIDGR (155 aa)). The VWFC domain occupies 260-312 (SLRGQFLHQGEIFWENSNCSTKCRCLDFNNEIFCQEMLAPFETVEPKIKFFQC). One can recognise a VWFD 1 domain in the interval 317–490 (TACVVFGDPH…RVPHPERKCS (174 aa)). Cystine bridges form between C319–C451 and C341–C489. The TIL 1 domain occupies 578-620 (PGHSHYSGCASGCPATCSDLTAPLRCTAPCPEGCECDDGHVLS). N-linked (GlcNAc...) asparagine glycans are attached at residues N666, N792, N822, N834, N877, N899, N907, and N928. The 176-residue stretch at 690 to 865 (GLCSVGQNQV…SWTTFDEICN (176 aa)) folds into the VWFD 2 domain. An intrachain disulfide couples C692 to C828. Positions 963 to 1013 (CPENSHFEECMSCVETCETLATGCCMDTCTEGCQCDEGFALRSPCVPRGEC) constitute a TIL 2 domain. 4 N-linked (GlcNAc...) asparagine glycosylation sites follow: N1025, N1041, N1207, and N1337. The VWFD 3 domain maps to 1066–1250 (ASCIVSGYGH…SWAKRDTFCR (185 aa)). 2 cysteine pairs are disulfide-bonded: C1068–C1213 and C1090–C1249. A TIL 3 domain is found at 1345 to 1398 (CPPNSHYESCVSLCQPRCAAIRLKSDCGHYCVEGCQCDPGYVLNGKSCILPQNC). Residues 1458 to 1633 (SFCLAAGGGV…KTNGMQKSCN (176 aa)) form the VWFD 4 domain. 7 disulfides stabilise this stretch: C1460/C1594, C1482/C1632, C1684/C1742, C1708/C1751, C1753/C1785, C1773/C1865, and C1804/C1824. N-linked (GlcNAc...) asparagine glycosylation is found at N1511, N1537, N1723, N1739, N1761, N1818, N1831, N1847, N1887, and N1906. Positions 1772–2026 (TCKAAQMEVS…YSCKINCPQH (255 aa)) constitute a ZP domain. 3 cysteine pairs are disulfide-bonded: C1947–C2007, C1968–C2023, and C2012–C2019. A lipid anchor (GPI-anchor amidated asparagine) is attached at N2058. A propeptide spans 2059 to 2120 (GGCEQICTSQ…LWAALHDPTS (62 aa)) (removed in mature form).

As to quaternary structure, may form homomeric filament after self-association or heteromeric filament after association with beta-tectorin. Post-translationally, at least 3 products of tectorin seem to exist: HMM, MMM and LMM. They may be generated by active processing or the result of proteolysis occurring between intrachain disulfide bonds. In terms of processing, the presence of a hydrophobic C-terminus preceded by a potential cleavage site strongly suggests that tectorins are synthesized as glycosylphosphatidylinositol-linked, membrane-bound precursors. Tectorins are targeted to the apical surface of the inner ear epithelia by the lipid and proteolytically released into the extracellular compartment. As to expression, expressed in the inner ear.

Its subcellular location is the cell membrane. It localises to the secreted. The protein localises to the extracellular space. The protein resides in the extracellular matrix. In terms of biological role, one of the major non-collagenous components of the tectorial membrane. The tectorial membrane is an extracellular matrix of the inner ear that covers the neuroepithelium of the cochlea and contacts the stereocilia bundles of specialized sensory hair cells. Sound induces movement of these hair cells relative to the tectorial membrane, deflects the stereocilia and leads to fluctuations in hair-cell membrane potential, transducing sound into electrical signals. This Gallus gallus (Chicken) protein is Alpha-tectorin (TECTA).